We begin with the raw amino-acid sequence, 447 residues long: Serine/threonine-protein phosphatase 2A 55 kDa regulatory subunit B alpha isoform (447 aa).

Ala2 carries the N-acetylalanine modification. 7 WD repeats span residues 11–80, 94–174, 175–218, 227–270, 288–325, 347–381, and 414–446; these read QWCF…FQSH, EKIN…IFAN, AHTY…VDIK, EVIT…KLFE, ISDVKFSHSGRYMMTRDYLSVKIWDLNMENRPVETYQV, ECCWNGSDSVVMTGSYNNFFRMFDRNTKRDITLEA, and DFNKKILHTAWHPKENIIAVATTNNLYIFQDKV.

It belongs to the phosphatase 2A regulatory subunit B family. In terms of assembly, PP2A consists of a common heterodimeric core enzyme, composed of a 36 kDa catalytic subunit (subunit C) and a 65 kDa constant regulatory subunit (PR65 or subunit A), that associates with a variety of regulatory subunits. Proteins that associate with the core dimer include three families of regulatory subunits B (the R2/B/PR55/B55, R3/B''/PR72/PR130/PR59 and R5/B'/B56 families), the 48 kDa variable regulatory subunit, viral proteins, and cell signaling molecules. Interacts with the PP2A C catalytic subunit PPP2CA. Interacts with the PP2A A subunit PPP2R1A. Interacts with TP53. Interacts with IER5. Interacts with MFHAS1; the interaction is direct. Interacts with PABIR1/FAM122A (via its N-terminus); the interaction is direct and inhibits PP2A activity. Interacts with ARPP19; the interaction is direct and inhibits PP2A activity. Interacts with CRTC3. Expressed in all tissues examined.

Its function is as follows. Substrate-recognition subunit of protein phosphatase 2A (PP2A) that plays a key role in cell cycle by controlling mitosis entry and exit. Involved in chromosome clustering during late mitosis by mediating dephosphorylation of MKI67. Essential for serine/threonine-protein phosphatase 2A-mediated dephosphorylation of WEE1, preventing its ubiquitin-mediated proteolysis, increasing WEE1 protein levels, and promoting the G2/M checkpoint. The chain is Serine/threonine-protein phosphatase 2A 55 kDa regulatory subunit B alpha isoform (PPP2R2A) from Homo sapiens (Human).